Here is a 180-residue protein sequence, read N- to C-terminus: MGIPMGKSMLVLLTFLAFASCCIAAYRPSETLCGGELVDTLQFVCGDRGFYFSRPASRVSRRSRGIVEECCFRSCDLALLETYCATPAKSERDVSTPPTVLPDNFPRYPVGKFFQYDTWKQSTQRLRRGLPALLRARRGHVLAKELEAFREAKRHRPLIALPTQDPAHGGAPPEMASNRK.

An N-terminal signal peptide occupies residues 1–24 (MGIPMGKSMLVLLTFLAFASCCIA). Positions 25–52 (AYRPSETLCGGELVDTLQFVCGDRGFYF) are b. 3 cysteine pairs are disulfide-bonded: C33-C71, C45-C84, and C70-C75. The c stretch occupies residues 53–64 (SRPASRVSRRSR). Positions 65 to 85 (GIVEECCFRSCDLALLETYCA) are a. The tract at residues 86–91 (TPAKSE) is d. A propeptide spans 92 to 180 (RDVSTPPTVL…APPEMASNRK (89 aa)) (e peptide). O-linked (GalNAc...) threonine glycans are attached at residues T96, T99, and T163. The tract at residues 161 to 180 (LPTQDPAHGGAPPEMASNRK) is disordered.

The protein belongs to the insulin family. In terms of assembly, interacts with MYORG; this interaction is required for IGF2 secretion. Interacts with integrins ITGAV:ITGB3 and ITGA6:ITGB4; integrin-binding is required for IGF2 signaling. Interacts with IGFBP2. Post-translationally, O-glycosylated with core 1 or possibly core 8 glycans. Thr-96 is a minor glycosylation site compared to Thr-99. In terms of processing, proteolytically processed by PCSK4, proIGF2 is cleaved at Arg-128 and Arg-92 to generate big-IGF2 and mature IGF2. As to expression, expressed in heart, placenta, lung, liver, muscle, kidney, tongue, limb, eye and pancreas.

Its subcellular location is the secreted. Its function is as follows. The insulin-like growth factors possess growth-promoting activity. Major fetal growth hormone in mammals. Plays a key role in regulating fetoplacental development. IGF2 is influenced by placental lactogen. Also involved in tissue differentiation. In adults, involved in glucose metabolism in adipose tissue, skeletal muscle and liver. Acts as a ligand for integrin which is required for IGF2 signaling. Positively regulates myogenic transcription factor MYOD1 function by facilitating the recruitment of transcriptional coactivators, thereby controlling muscle terminal differentiation. Inhibits myoblast differentiation and modulates metabolism via increasing the mitochondrial respiration rate. Functionally, preptin undergoes glucose-mediated co-secretion with insulin, and acts as a physiological amplifier of glucose-mediated insulin secretion. Exhibits osteogenic properties by increasing osteoblast mitogenic activity through phosphoactivation of MAPK1 and MAPK3. This chain is Insulin-like growth factor 2, found in Homo sapiens (Human).